A 253-amino-acid polypeptide reads, in one-letter code: Small ribosomal subunit protein uS3 (253 aa).

Residues 39–109 (IRNYVLARLK…EVKIDVVEVI (71 aa)) form the KH type-2 domain. A disordered region spans residues 220–253 (DEMKKMKDRRNDGGAKGRDSRDNRSKRRSRSKRS). A compositionally biased stretch (basic and acidic residues) spans 221–242 (EMKKMKDRRNDGGAKGRDSRDN). Basic residues predominate over residues 243 to 253 (RSKRRSRSKRS).

The protein belongs to the universal ribosomal protein uS3 family. As to quaternary structure, part of the 30S ribosomal subunit. Forms a tight complex with proteins S10 and S14.

Functionally, binds the lower part of the 30S subunit head. Binds mRNA in the 70S ribosome, positioning it for translation. This chain is Small ribosomal subunit protein uS3, found in Chlorobium chlorochromatii (strain CaD3).